A 339-amino-acid chain; its full sequence is Undecaprenyl-phosphate 4-deoxy-4-formamido-L-arabinose transferase (339 aa).

Helical transmembrane passes span 235-255 (LSLV…FLLV) and 269-289 (LFVL…GMGL).

The protein belongs to the glycosyltransferase 2 family.

It localises to the cell inner membrane. The enzyme catalyses UDP-4-deoxy-4-formamido-beta-L-arabinose + di-trans,octa-cis-undecaprenyl phosphate = 4-deoxy-4-formamido-alpha-L-arabinopyranosyl di-trans,octa-cis-undecaprenyl phosphate + UDP. It participates in glycolipid biosynthesis; 4-amino-4-deoxy-alpha-L-arabinose undecaprenyl phosphate biosynthesis; 4-amino-4-deoxy-alpha-L-arabinose undecaprenyl phosphate from UDP-4-deoxy-4-formamido-beta-L-arabinose and undecaprenyl phosphate: step 1/2. It functions in the pathway bacterial outer membrane biogenesis; lipopolysaccharide biosynthesis. Catalyzes the transfer of 4-deoxy-4-formamido-L-arabinose from UDP to undecaprenyl phosphate. The modified arabinose is attached to lipid A and is required for resistance to polymyxin and cationic antimicrobial peptides. This chain is Undecaprenyl-phosphate 4-deoxy-4-formamido-L-arabinose transferase, found in Pseudomonas aeruginosa (strain UCBPP-PA14).